The primary structure comprises 402 residues: 1-deoxy-D-xylulose 5-phosphate reductoisomerase (402 aa).

NADPH contacts are provided by Thr21, Gly22, Ser23, Ile24, Gly47, Asn50, and Asn127. Residue Lys128 participates in 1-deoxy-D-xylulose 5-phosphate binding. An NADPH-binding site is contributed by Glu129. Asp151 is a Mn(2+) binding site. 4 residues coordinate 1-deoxy-D-xylulose 5-phosphate: Ser152, Glu153, Ser177, and His200. Glu153 serves as a coordination point for Mn(2+). Gly206 is a binding site for NADPH. 1-deoxy-D-xylulose 5-phosphate-binding residues include Ser213, Asn218, Lys219, and Glu222. Glu222 is a Mn(2+) binding site.

This sequence belongs to the DXR family. Requires Mg(2+) as cofactor. Mn(2+) serves as cofactor.

It catalyses the reaction 2-C-methyl-D-erythritol 4-phosphate + NADP(+) = 1-deoxy-D-xylulose 5-phosphate + NADPH + H(+). It participates in isoprenoid biosynthesis; isopentenyl diphosphate biosynthesis via DXP pathway; isopentenyl diphosphate from 1-deoxy-D-xylulose 5-phosphate: step 1/6. In terms of biological role, catalyzes the NADPH-dependent rearrangement and reduction of 1-deoxy-D-xylulose-5-phosphate (DXP) to 2-C-methyl-D-erythritol 4-phosphate (MEP). This chain is 1-deoxy-D-xylulose 5-phosphate reductoisomerase, found in Mycobacterium marinum (strain ATCC BAA-535 / M).